The primary structure comprises 579 residues: DBIRD complex subunit ZNF326 (579 aa).

The mediates transcriptional activation stretch occupies residues 1 to 124 (MDFEDDYTHS…YRNSLDSFGG (124 aa)). 12 positions are modified to phosphoserine: S48, S56, S63, S69, S81, S82, S91, S106, S114, S118, S121, and S137. K140 participates in a covalent cross-link: Glycyl lysine isopeptide (Lys-Gly) (interchain with G-Cter in SUMO2). Positions 154 to 194 (YSSYSSFSSPHMKPAPVGSRGRGTPAYPESTFGSRNYDAFG) are disordered. Residue R173 is modified to Omega-N-methylarginine. S212 is modified (phosphoserine). R235 is subject to Omega-N-methylarginine. The Bipartite nuclear localization signal motif lies at 238-260 (KRKMIQPFNKPGGTFIKKPKLAK). Residue K240 forms a Glycyl lysine isopeptide (Lys-Gly) (interchain with G-Cter in SUMO2) linkage. At K247 the chain carries N6-acetyllysine; alternate. K247 participates in a covalent cross-link: Glycyl lysine isopeptide (Lys-Gly) (interchain with G-Cter in SUMO2); alternate. Residues 248 to 302 (PGGTFIKKPKLAKPVEKMSLSKSPTKTDPKNEEEEKRRIEARREKQRRRREKNSE) form a disordered region. T251 is subject to Phosphothreonine. Residues K254 and K264 each participate in a glycyl lysine isopeptide (Lys-Gly) (interchain with G-Cter in SUMO2) cross-link. S270 carries the post-translational modification Phosphoserine. Positions 272–290 (TKTDPKNEEEEKRRIEARR) are enriched in basic and acidic residues. The C2H2 AKAP95-type 1 zinc finger occupies 314–336 (CSFCKFRTFEEKDIELHLESASH). A Glycyl lysine isopeptide (Lys-Gly) (interchain with G-Cter in SUMO2) cross-link involves residue K401. A C2H2 AKAP95-type 2 zinc finger spans residues 407-430 (CSACSVYIPALHSSVQQHLKSPDH). Glycyl lysine isopeptide (Lys-Gly) (interchain with G-Cter in SUMO2) cross-links involve residues K459 and K467. Residues 470-579 (NPFEIQDHSQ…GFSVDQAEEN (110 aa)) form a disordered region. Composition is skewed to acidic residues over residues 483–520 (IEGDEEEEEKIDEPVEEEEEEEEEEEEVGEVEEAEEVG), 529–541 (GDTEEGGDVEGEG), and 549–565 (GEGEGEGVGEVEEEEAK).

The protein belongs to the AKAP95 family. Component of the DBIRD complex. Interacts with CCAR2; the interaction is direct.

It localises to the nucleus matrix. Its function is as follows. Core component of the DBIRD complex, a multiprotein complex that acts at the interface between core mRNP particles and RNA polymerase II (RNAPII) and integrates transcript elongation with the regulation of alternative splicing: the DBIRD complex affects local transcript elongation rates and alternative splicing of a large set of exons embedded in (A + T)-rich DNA regions. May play a role in neuronal differentiation and is able to bind DNA and activate expression in vitro. The protein is DBIRD complex subunit ZNF326 (ZNF326) of Bos taurus (Bovine).